The primary structure comprises 434 residues: MDLYIQIIVVACLTGMTSLLAHRSAAVFHDGIRPILPQLIEGYMNRREAGSIAFGLSIGFVASVGISFTLKTGLLNAWLLFLPTDILGVLAINSLMAFGLGAIWGVLILTCLLPVNQLLTALPVDVLGSLGELSSPVVSAFALFPLVAIFYQFGWKQSLIAAVVVLMTRVVVVRYFPHLNPESIEIFIGMVMLLGIAITHDLRHRDENDIDASGLSVFEERTSRIIKNLPYIAIVGALIAAVASMKIFAGSEVSIFTLEKAYSAGVTPEQSQTLINQAALAEFMRGLGFVPLIATTALATGVYAVAGFTFVYAVDYLSPNPMVAAVLGAVVISAEVLLLRSIGKWLGRYPSVRNASDNIRNAMNMLMEVALLVGSIFAAIKMAGYTGFSIAVAIYFLNESLGRPVQKMAAPVVAVMITGILLNVLYWLGLFVPA.

Helical transmembrane passes span 50-70, 72-92, 95-115, 135-155, 158-178, 179-199, 229-249, 288-308, 319-339, 376-396, and 412-432; these read GSIAFGLSIGFVASVGISFTL, TGLLNAWLLFLPTDILGVLAI, LMAFGLGAIWGVLILTCLLPV, SPVVSAFALFPLVAIFYQFGW, SLIAAVVVLMTRVVVVRYFPH, LNPESIEIFIGMVMLLGIAIT, LPYIAIVGALIAAVASMKIFA, GFVPLIATTALATGVYAVAGF, PNPMVAAVLGAVVISAEVLLL, IFAAIKMAGYTGFSIAVAIYF, and VVAVMITGILLNVLYWLGLFV.

The protein resides in the cell membrane. This is an uncharacterized protein from Escherichia coli (strain K12).